The primary structure comprises 156 residues: ATP synthase subunit b (156 aa).

The chain crosses the membrane as a helical span at residues 11-31 (AIAFVLFVLFCMKYVWPPLMA).

The protein belongs to the ATPase B chain family. As to quaternary structure, F-type ATPases have 2 components, F(1) - the catalytic core - and F(0) - the membrane proton channel. F(1) has five subunits: alpha(3), beta(3), gamma(1), delta(1), epsilon(1). F(0) has three main subunits: a(1), b(2) and c(10-14). The alpha and beta chains form an alternating ring which encloses part of the gamma chain. F(1) is attached to F(0) by a central stalk formed by the gamma and epsilon chains, while a peripheral stalk is formed by the delta and b chains.

The protein localises to the cell inner membrane. Its function is as follows. F(1)F(0) ATP synthase produces ATP from ADP in the presence of a proton or sodium gradient. F-type ATPases consist of two structural domains, F(1) containing the extramembraneous catalytic core and F(0) containing the membrane proton channel, linked together by a central stalk and a peripheral stalk. During catalysis, ATP synthesis in the catalytic domain of F(1) is coupled via a rotary mechanism of the central stalk subunits to proton translocation. Functionally, component of the F(0) channel, it forms part of the peripheral stalk, linking F(1) to F(0). The chain is ATP synthase subunit b from Sodalis glossinidius (strain morsitans).